The chain runs to 323 residues: Cytochrome c biogenesis protein CcsA (323 aa).

Helical transmembrane passes span 9–29 (ILTH…LITL), 37–57 (LYVS…GLLV), 71–91 (LYES…FTYF), 100–120 (VSAI…SGFL), 145–165 (MVLG…LIVI), 227–247 (IISL…VWAN), 261–275 (TWAF…IYLH), and 288–308 (AIVA…VNLL).

It belongs to the CcmF/CycK/Ccl1/NrfE/CcsA family. May interact with Ccs1.

The protein localises to the plastid. It localises to the chloroplast thylakoid membrane. Functionally, required during biogenesis of c-type cytochromes (cytochrome c6 and cytochrome f) at the step of heme attachment. The protein is Cytochrome c biogenesis protein CcsA of Cucumis sativus (Cucumber).